A 97-amino-acid chain; its full sequence is Apolipoprotein C-II (97 aa).

Positions 1–22 (MGSRFFLALFLVLLVLGNEVQG) are cleaved as a signal peptide. The segment at 63-71 (SVDEKLRDM) is lipid binding. A lipoprotein lipase cofactor region spans residues 75–97 (SSAAMSTYAGIFTDQLLTLLKGE).

This sequence belongs to the apolipoprotein C2 family. In terms of processing, proapolipoprotein C-II is synthesized as a sialic acid containing glycoprotein which is subsequently desialylated prior to its proteolytic processing. Post-translationally, proapolipoprotein C-II, the major form found in plasma undergoes proteolytic cleavage of its N-terminal hexapeptide to generate the mature form apolipoprotein C-II, which occurs as the minor form in plasma.

The protein resides in the secreted. Component of chylomicrons, very low-density lipoproteins (VLDL), low-density lipoproteins (LDL), and high-density lipoproteins (HDL) in plasma. Plays an important role in lipoprotein metabolism as an activator of lipoprotein lipase. This Grammomys surdaster (African woodland thicket rat) protein is Apolipoprotein C-II (Apoc2).